The chain runs to 397 residues: Citrate synthase (397 aa).

Active-site residues include H266 and D320.

It belongs to the citrate synthase family.

The catalysed reaction is oxaloacetate + acetyl-CoA + H2O = citrate + CoA + H(+). The protein operates within carbohydrate metabolism; tricarboxylic acid cycle; isocitrate from oxaloacetate: step 1/2. The polypeptide is Citrate synthase (gltA) (Synechocystis sp. (strain ATCC 27184 / PCC 6803 / Kazusa)).